A 491-amino-acid polypeptide reads, in one-letter code: Nickel-binding protein NikA (491 aa).

Residues 1–18 form the signal peptide; it reads MKFKRLATIFSAVLVLSG. Residue Cys-19 is the site of N-palmitoyl cysteine attachment. Residue Cys-19 is the site of S-diacylglycerol cysteine attachment.

It belongs to the bacterial solute-binding protein 5 family. The complex is composed of two ATP-binding proteins (NikD and NikE), two transmembrane proteins (NikB and NikC) and a solute-binding protein (NikA).

It is found in the cell membrane. Functionally, part of the ABC transporter complex NikABCDE (Opp2) involved in nickel import. Binds nickel and transfers it to the membrane-bound permease. Required for full urease activity and plays a significant role in the virulence of S.aureus during urinary tract infection (UTI). May bind nickel via a nickel-chelator. This Staphylococcus aureus (strain NCTC 8325 / PS 47) protein is Nickel-binding protein NikA.